A 352-amino-acid polypeptide reads, in one-letter code: Protein RecA (352 aa).

67–74 (GPESSGKT) is a binding site for ATP.

The protein belongs to the RecA family.

Its subcellular location is the cytoplasm. Its function is as follows. Can catalyze the hydrolysis of ATP in the presence of single-stranded DNA, the ATP-dependent uptake of single-stranded DNA by duplex DNA, and the ATP-dependent hybridization of homologous single-stranded DNAs. It interacts with LexA causing its activation and leading to its autocatalytic cleavage. This chain is Protein RecA, found in Chlamydia trachomatis serovar L2 (strain ATCC VR-902B / DSM 19102 / 434/Bu).